The chain runs to 1010 residues: SSGPPQPGPMGPMGPRGPPGPPGSSGPQGFTGPPGEPGEPGASGAMGSRGPSGPPGKNGDDGEPGKPGRPGERGAAGPQGARGFSGLDGAKGDAGPAGPKGESGAPGENGVPGVMGARGLPGERGRPGPPGPSGARGNDGNTGPGGPPGPTGPAGPPGFPGGAGVKGETGPAGGRGNEGPQGARGEPGNPGPAGPAGPAGSPGTDGGPGAKGSPGAAGLAGAPGFPGARGPAGAQGAVGAPGPKGNNGDPGASGPKGEPGAKGEPGPAGVQGLSGPSGEEGKRGARGEPGGAGPRGPPGERGAPGARGFPGADGGAGGKGAPGERGATGESGSPGAPGAPGSKGVTGSPGSPGPDGKTGPAGVAGQDGRPGPPGSAGARGQPGVMGFPGPKGPAGESGKPGERGPAGATGPVGAPGKXGDVGAPGPSGVAGPAGEKTGKPGEQGAPGEAGPPGPSGPRGDRGFPGERGAPGLGGPTGARGEPGAAGAPGGLGAPGMQGMPGERGASGLPGAKGERGDAGGKGGDGAPGKDGARGXTGALGVPGPHGAQGEKGEGGAVGVAGPTGPRGAPGERGETGPPGPAGFAGPPGADGQPGAKGETGDSGPKGDAGAPGPGGPVGAAGPQGPAGPTGPKGARGGAGPPGATGFPGPAGRVGPSGPAGAAGPPGPVGPVGKDGARGETGAAGRPGEAGAAGAPGPSGEKGLVGLPGQRGERGFSGLPGPSGEPGKQGPSGPVGERGPPGPSGPPGLSGAPGEAGREGSQGHDGAPGRDGSAGPKGDRGESGMAGPPGPPGAPGAPGAVGPSGKSGDRGETGPAGPAGPSGPAGVRGGPAGAKGDRGEAGEAGDRGHKGHRGFTGMQGLPGPAGAHGERGPAGASGPAGPRGPAGSNGAAGKDGMNGLPGPLGPPGPRGRNGEMGPAGPPGPPGPAGPPGPPGSGFDFVSQPLQEEAPDPFRGGHYRSPDGTQKSPARALLLGGSNDVELRLPLLDLAPMDVGAPDQEFGVEVGPVCFL.

A compositionally biased stretch (pro residues) spans 1–24; it reads SSGPPQPGPMGPMGPRGPPGPPGS. A disordered region spans residues 1–969; it reads SSGPPQPGPM…PDGTQKSPAR (969 aa). Positions 25-48 are enriched in low complexity; it reads SGPQGFTGPPGEPGEPGASGAMGS. A compositionally biased stretch (basic and acidic residues) spans 58–72; that stretch reads NGDDGEPGKPGRPGE. Residues 73-82 show a composition bias toward low complexity; the sequence is RGAAGPQGAR. Positions 145–159 are enriched in pro residues; sequence GGPPGPTGPAGPPGF. 2 stretches are compositionally biased toward gly residues: residues 160-179 and 203-212; these read PGGA…GNEG and GTDGGPGAKG. Low complexity-rich tracts occupy residues 213 to 268 and 300 to 310; these read SPGA…PGPA and ERGAPGARGFP. Positions 311–323 are enriched in gly residues; the sequence is GADGGAGGKGAPG. Composition is skewed to low complexity over residues 324 to 343 and 405 to 448; these read ERGA…PGSK and PAGA…APGE. Composition is skewed to gly residues over residues 468–477, 486–495, and 519–528; these read GAPGLGGPTG, GAPGGLGAPG, and GGKGGDGAPG. Low complexity-rich tracts occupy residues 559-568 and 581-596; these read VAGPTGPRGA and AGFA…PGAK. Gly residues-rich tracts occupy residues 609–618 and 633–642; these read GAPGPGGPVG and GARGGAGPPG. Low complexity-rich tracts occupy residues 643-662, 679-701, and 796-805; these read ATGF…AGAA, ETGA…SGEK, and APGAVGPSGK. Basic and acidic residues predominate over residues 834–847; that stretch reads KGDRGEAGEAGDRG. Low complexity predominate over residues 872–900; that stretch reads PAGASGPAGPRGPAGSNGAAGKDGMNGLP. The segment covering 918–933 has biased composition (pro residues); it reads AGPPGPPGPAGPPGPP. The Fibrillar collagen NC1 domain occupies 982–1010; that stretch reads RLPLLDLAPMDVGAPDQEFGVEVGPVCFL.

The protein belongs to the fibrillar collagen family.

The protein localises to the secreted. Its subcellular location is the extracellular space. It is found in the extracellular matrix. This is Collagen, type I, alpha 1b from Epinephelus marginatus (Dusky grouper).